The following is a 488-amino-acid chain: Monodehydroascorbate reductase 4, peroxisomal (488 aa).

Residues methionine 1 to arginine 3 lie on the Cytoplasmic side of the membrane. The helical transmembrane segment at alanine 4–threonine 24 threads the bilayer. FAD contacts are provided by residues glycine 12–alanine 15, glutamate 39, arginine 46, lysine 51, and arginine 145–aspartate 146. Topologically, residues arginine 25–proline 458 are peroxisomal. Residues glycine 170–glutamate 176, glutamate 194, arginine 200, and glycine 259 contribute to the NAD(+) site. Tyrosine 172–glutamate 176 provides a ligand contact to NADP(+). The NADP(+) site is built by arginine 200 and glycine 259. Position 296 (aspartate 296) interacts with FAD. Position 312 to 313 (glutamate 312 to histidine 313) interacts with NAD(+). Glutamate 312–histidine 313 provides a ligand contact to NADP(+). Position 314 (valine 314) interacts with FAD. Position 318 (arginine 318) interacts with L-ascorbate. Tyrosine 344 contributes to the FAD binding site. Tyrosine 344 provides a ligand contact to NAD(+). Tyrosine 344 serves as a coordination point for NADP(+). Arginine 346 is an L-ascorbate binding site. A helical transmembrane segment spans residues leucine 459–phenylalanine 479. Residues tryptophan 480–tryptophan 488 lie on the Cytoplasmic side of the membrane.

The protein belongs to the FAD-dependent oxidoreductase family. Requires FAD as cofactor.

The protein localises to the peroxisome membrane. It carries out the reaction 2 monodehydro-L-ascorbate radical + NADH + H(+) = 2 L-ascorbate + NAD(+). Its function is as follows. Catalyzes the conversion of monodehydroascorbate to ascorbate, oxidizing NADH in the process. Involved in the detoxification of H(2)O(2) that escapes the peroxisome and causes oxidative damage to oil bodies. In Arabidopsis thaliana (Mouse-ear cress), this protein is Monodehydroascorbate reductase 4, peroxisomal.